A 465-amino-acid chain; its full sequence is Fumarate hydratase class II (465 aa).

Substrate contacts are provided by residues 98 to 100 (SGT), arginine 126, 129 to 132 (HPND), 139 to 141 (SSN), and threonine 187. Histidine 188 functions as the Proton donor/acceptor in the catalytic mechanism. Serine 318 is an active-site residue. Residues serine 319 and 324–326 (KVN) each bind substrate.

It belongs to the class-II fumarase/aspartase family. Fumarase subfamily. In terms of assembly, homotetramer.

It is found in the cytoplasm. The enzyme catalyses (S)-malate = fumarate + H2O. Its pathway is carbohydrate metabolism; tricarboxylic acid cycle; (S)-malate from fumarate: step 1/1. Involved in the TCA cycle. Catalyzes the stereospecific interconversion of fumarate to L-malate. In Yersinia pestis, this protein is Fumarate hydratase class II.